Consider the following 101-residue polypeptide: MEAKFFCFLEIIGVGYKASTNAQGSILYLKLGFSHEIRLQVTPSVRVFCLKPNLICCTGMDHQKVTQFAAIVKSCKPPEVYKGKGIQYRNEIIHKKQGKKK.

Belongs to the universal ribosomal protein uL6 family.

The protein localises to the mitochondrion. The sequence is that of Large ribosomal subunit protein uL6m (RPL6) from Marchantia polymorpha (Common liverwort).